The chain runs to 214 residues: Osteoclast-stimulating factor 1 (214 aa).

The 60-residue stretch at G12 to E71 folds into the SH3 domain. ANK repeat units follow at residues S72–G101, A105–Q135, and L139–L168.

The protein resides in the cytoplasm. In terms of biological role, induces bone resorption, acting probably through a signaling cascade which results in the secretion of factor(s) enhancing osteoclast formation and activity. The polypeptide is Osteoclast-stimulating factor 1 (ostf1) (Xenopus laevis (African clawed frog)).